We begin with the raw amino-acid sequence, 248 residues long: MPPETLAYLQTLIGSLDGNARLYQTALTHRSVIGNTALSHHNESNQRLEFLGDAVLGLLISHFLFQNFPASAEGDLSKTRAKIVNSKSLACFARSIGLGEHLLLGESAAHYNIRDSESALADAFESLIGAIYLDKGLDAAYGFVDKHIIHHQSFSAIVASEQNYKSCLIEYSQAHHVAAPVYTVIAEHGAEHDKEFTVEVSCNNIKGCGTARRKKDAEQLAAKEAMERIIALQPLPHEPKDEENSTTT.

An RNase III domain is found at 6 to 136 (LAYLQTLIGS…LIGAIYLDKG (131 aa)). Residue Glu49 participates in Mg(2+) binding. Residue Asp53 is part of the active site. 2 residues coordinate Mg(2+): Asp122 and Glu125. The active site involves Glu125. Residues 163 to 231 (NYKSCLIEYS…AKEAMERIIA (69 aa)) form the DRBM domain.

Belongs to the ribonuclease III family. In terms of assembly, homodimer. Mg(2+) serves as cofactor.

Its subcellular location is the cytoplasm. The catalysed reaction is Endonucleolytic cleavage to 5'-phosphomonoester.. In terms of biological role, digests double-stranded RNA. Involved in the processing of primary rRNA transcript to yield the immediate precursors to the large and small rRNAs (23S and 16S). Processes some mRNAs, and tRNAs when they are encoded in the rRNA operon. Processes pre-crRNA and tracrRNA of type II CRISPR loci if present in the organism. In Chlorobium chlorochromatii (strain CaD3), this protein is Ribonuclease 3.